The following is an 85-amino-acid chain: Toxin TdNa8 (85 aa).

The signal sequence occupies residues 1–19; sequence MNYLTLIAAASLLTAGTES. The region spanning 21-81 is the LCN-type CS-alpha/beta domain; sequence KDGYPVKEGD…AAIKGYGRCR (61 aa). 4 disulfide bridges follow: Cys31/Cys80, Cys35/Cys56, Cys42/Cys63, and Cys46/Cys65. Pro82 bears the Proline amide mark.

The protein belongs to the long (4 C-C) scorpion toxin superfamily. Sodium channel inhibitor family. Alpha subfamily. In terms of tissue distribution, expressed by the venom gland.

It is found in the secreted. Alpha toxins bind voltage-independently at site-3 of sodium channels (Nav) and inhibit the inactivation of the activated channels, thereby blocking neuronal transmission. In Tityus discrepans (Venezuelan scorpion), this protein is Toxin TdNa8.